The following is a 138-amino-acid chain: Basic phospholipase A2 BP-III (138 aa).

The first 16 residues, 1–16 (MRTLWIMAVLLVGVDG), serve as a signal peptide directing secretion. Disulfide bonds link C42–C132, C44–C60, C59–C112, C65–C138, C66–C105, C73–C98, and C91–C103. Ca(2+) contacts are provided by G45 and G47. Residue H63 is part of the active site. The active site involves D106.

Belongs to the phospholipase A2 family. Group II subfamily. K49 sub-subfamily. It depends on Ca(2+) as a cofactor. In terms of tissue distribution, expressed by the venom gland.

The protein localises to the secreted. It catalyses the reaction a 1,2-diacyl-sn-glycero-3-phosphocholine + H2O = a 1-acyl-sn-glycero-3-phosphocholine + a fatty acid + H(+). In terms of biological role, snake venom phospholipase A2 (PLA2) that has low phospholipase A2 activity. Shows anticoagulant activities, strong myolytic activity, infiltration of polymorphonuclear cells, and edema in stromal tissues. Induces cell death of Jurkat cells in a concentration dependent manner. PLA2 catalyzes the calcium-dependent hydrolysis of the 2-acyl groups in 3-sn-phosphoglycerides. This chain is Basic phospholipase A2 BP-III, found in Protobothrops flavoviridis (Habu).